A 135-amino-acid polypeptide reads, in one-letter code: MEWNTLVLGLLVLSVVASSNNTSTASTPRPSSSTHASTTVKATTVATTSTTTATSTSSTTSAKPGSTTHDPNVMRPHAHNDFYNAHCTSHMYELSLSSFAAWWTMLNALILMGAFCIVLRHCCFQNFTATTTKGY.

Positions 1–19 (MEWNTLVLGLLVLSVVASS) are cleaved as a signal peptide. The Virion surface segment spans residues 20 to 98 (NNTSTASTPR…SHMYELSLSS (79 aa)). The span at 21–68 (NTSTASTPRPSSSTHASTTVKATTVATTSTTTATSTSSTTSAKPGSTT) shows a compositional bias: low complexity. The interval 21–73 (NTSTASTPRPSSSTHASTTVKATTVATTSTTTATSTSSTTSAKPGSTTHDPNV) is disordered. The chain crosses the membrane as a helical span at residues 99 to 119 (FAAWWTMLNALILMGAFCIVL). The Intravirion segment spans residues 120–135 (RHCCFQNFTATTTKGY).

It belongs to the herpesviridae glycoprotein N family. In terms of assembly, interacts (via N-terminus) with gM (via N-terminus). The gM-gN heterodimer forms the gCII complex. O-glycosylated.

The protein localises to the virion membrane. Its subcellular location is the host membrane. The protein resides in the host Golgi apparatus. It localises to the host trans-Golgi network. Functionally, envelope glycoprotein necessary for proper maturation of gM and modulation of its membrane fusion activity. Also plays a critical role in virion morphogenesis. The sequence is that of Envelope glycoprotein N from Homo sapiens (Human).